Here is a 428-residue protein sequence, read N- to C-terminus: Cell division cycle 20.6, cofactor of APC complex (428 aa).

WD repeat units lie at residues 106–145, 150–189, 193–230, 234–273, 282–324, 326–367, and 370–409; these read WFLT…TSKL, DENG…HVRT, GHES…SIIG, GHTE…SNPT, EHTA…CLNS, ETGS…KMAE, and GHTS…PKTT.

The protein belongs to the WD repeat CDC20/Fizzy family. As to quaternary structure, the APC/C is composed of at least 11 subunits that stay tightly associated throughout the cell cycle.

The protein resides in the nucleus. It participates in protein modification; protein ubiquitination. In terms of biological role, component of the anaphase promoting complex/cyclosome (APC/C), a cell cycle-regulated E3 ubiquitin-protein ligase complex that controls progression through mitosis and the G1 phase of the cell cycle. The sequence is that of Cell division cycle 20.6, cofactor of APC complex (CDC20-6) from Arabidopsis thaliana (Mouse-ear cress).